A 299-amino-acid polypeptide reads, in one-letter code: Taste receptor type 2 member 5 (299 aa).

A topological domain (extracellular) is located at residue M1. Residues 2 to 22 (LSAGLGLLMLVAVVEFLIGLI) traverse the membrane as a helical segment. Residues 23 to 45 (GNGVLVVWSFREWMRKFNWSSYN) lie on the Cytoplasmic side of the membrane. A helical transmembrane segment spans residues 46-66 (LIILGLAGCRFLLQWLIILDL). The Extracellular segment spans residues 67–82 (SLFPLFQSSRWLRYLS). A helical membrane pass occupies residues 83-103 (IFWVLVSQASLWFATFLSVFY). Residues 104–127 (CKKITTFDRPAYLWLKQRAYNLSL) lie on the Cytoplasmic side of the membrane. Residues 128–148 (WCLLGYFIINLLLTVQIGLMF) form a helical membrane-spanning segment. The Extracellular segment spans residues 149 to 175 (YHPPQGNSSIRYPFESWQYLYAFRLNS). N155 carries N-linked (GlcNAc...) asparagine glycosylation. The chain crosses the membrane as a helical span at residues 176–196 (GSYLPLMVFLVSSGMLIVSLY). Residues 197-223 (THHKKMKVHSAGRRDVRAKAHITALKS) lie on the Cytoplasmic side of the membrane. Residues 224 to 244 (LGCFLFLHLVYIMASPFSITS) traverse the membrane as a helical segment. Topologically, residues 245–253 (KTYPPDLTS) are extracellular. Residues 254-274 (VFIWETLMAAYPSLHSLILIM) form a helical membrane-spanning segment. Residues 275–299 (GIPRVKQTCQKILWKTVCARRCWGP) are Cytoplasmic-facing.

Belongs to the G-protein coupled receptor T2R family.

The protein localises to the membrane. Functionally, receptor that may play a role in the perception of bitterness and is gustducin-linked. May play a role in sensing the chemical composition of the gastrointestinal content. The activity of this receptor may stimulate alpha gustducin, mediate PLC-beta-2 activation and lead to the gating of TRPM5. The polypeptide is Taste receptor type 2 member 5 (TAS2R5) (Gorilla gorilla gorilla (Western lowland gorilla)).